A 446-amino-acid chain; its full sequence is Cytochrome P450 monooxygenase ATR14 (446 aa).

Positions 403-446 are disordered; that stretch reads NFTYPDEFRPDRWLDDRDQKEYEHDHGDAMQPFSVGPRDCPSQK. Residues 408–430 are compositionally biased toward basic and acidic residues; that stretch reads DEFRPDRWLDDRDQKEYEHDHGD. Position 442 (Cys442) interacts with heme.

This sequence belongs to the cytochrome P450 family. It depends on heme as a cofactor.

It functions in the pathway mycotoxin biosynthesis. In terms of biological role, cytochrome P450 monooxygenase; part of the core atranone cluster (CAC) which products are predicted to catalyze most or all steps of mycotoxin atranone synthesis, starting from geranylgeranyl pyrophosphate (GGPP). The initial cyclization of GGPP to dolabellane is probably performed by the terpene cyclase ATR13. The Baeyer-Villiger oxidation near the end of the atranone synthesis, which converts atranones D and E to atranones F and G is predicted to be catalyzed by the monooxygenase ATR8. Of the CAC's other predicted gene products, the reducing PKS ATR6 might synthesize a polyketide chain. This polyketide is probably transferred onto the atranone backbone by the polyketide transferase ATR5. Other predicted CAC products include 4 oxygenases (ATR2, ATR3, ATR4, and ATR14), 3 short-chain reductases (ATR7, ATR9, and ATR10), and a methyltransferase (ATR12). These may all be involved in the various steps of atranone biosynthesis, although their specific roles must await experimental determination. The sequence is that of Cytochrome P450 monooxygenase ATR14 from Stachybotrys chlorohalonatus (strain IBT 40285).